The following is a 199-amino-acid chain: MRAVCVFVLACVAVSGAPGVRGQDGPAEEELFQRAEDLLLRSILTQMEEQNSENDQPEWMEKRQHPGKRQHPGKREEDLEPEVEMERWRRQHPGKRAPLDLGMLEDPTALSELSKRQHPGKRYLMLLHKRQHPGRRELQEADGDSAELEKRQHPGKRRCEGWADAGCGLLELLDTSGAPEKRQHPGRRAELEDELPGLE.

The first 22 residues, 1–22 (MRAVCVFVLACVAVSGAPGVRG), serve as a signal peptide directing secretion. Residues 48–90 (EEQNSENDQPEWMEKRQHPGKRQHPGKREEDLEPEVEMERWRR) are disordered. Position 64 is a pyrrolidone carboxylic acid (Gln-64). At Pro-66 the chain carries Proline amide. Gln-70 carries the pyrrolidone carboxylic acid modification. At Pro-72 the chain carries Proline amide. Residue Gln-91 is modified to Pyrrolidone carboxylic acid. Pro-93 carries the post-translational modification Proline amide. Residue Gln-117 is modified to Pyrrolidone carboxylic acid. Pro-119 carries the post-translational modification Proline amide. Disordered regions lie at residues 129–160 (KRQH…RRCE) and 175–199 (TSGA…PGLE). Gln-131 carries the post-translational modification Pyrrolidone carboxylic acid. Residue Pro-133 is modified to Proline amide. Composition is skewed to basic and acidic residues over residues 147–160 (ELEK…RRCE) and 179–190 (PEKRQHPGRRAE). At Gln-152 the chain carries Pyrrolidone carboxylic acid. Position 154 is a proline amide (Pro-154). The residue at position 183 (Gln-183) is a Pyrrolidone carboxylic acid. Proline amide is present on Pro-185.

Belongs to the TRH family.

The protein localises to the secreted. Its function is as follows. Functions as a regulator of the biosynthesis of TSH in the anterior pituitary gland and as a neurotransmitter/ neuromodulator in the central and peripheral nervous systems. The protein is Pro-thyrotropin-releasing hormone (trh) of Danio rerio (Zebrafish).